Reading from the N-terminus, the 202-residue chain is Probable molybdenum cofactor guanylyltransferase (202 aa).

Residues 13-15 (LAG), Lys-25, Asp-71, and Asp-103 contribute to the GTP site. Asp-103 contributes to the Mg(2+) binding site.

Belongs to the MobA family. It depends on Mg(2+) as a cofactor.

The protein resides in the cytoplasm. The enzyme catalyses Mo-molybdopterin + GTP + H(+) = Mo-molybdopterin guanine dinucleotide + diphosphate. Transfers a GMP moiety from GTP to Mo-molybdopterin (Mo-MPT) cofactor (Moco or molybdenum cofactor) to form Mo-molybdopterin guanine dinucleotide (Mo-MGD) cofactor. The polypeptide is Probable molybdenum cofactor guanylyltransferase (Opitutus terrae (strain DSM 11246 / JCM 15787 / PB90-1)).